The sequence spans 334 residues: Fructose-1,6-bisphosphatase class 1 (334 aa).

Mg(2+)-binding residues include Glu90, Asp113, Leu115, and Asp116. Substrate-binding positions include 116–119, Asn209, Tyr242, and Lys272; that span reads DGSS. Mg(2+) is bound at residue Glu278.

This sequence belongs to the FBPase class 1 family. As to quaternary structure, homotetramer. Requires Mg(2+) as cofactor.

It is found in the cytoplasm. It carries out the reaction beta-D-fructose 1,6-bisphosphate + H2O = beta-D-fructose 6-phosphate + phosphate. It participates in carbohydrate biosynthesis; gluconeogenesis. The sequence is that of Fructose-1,6-bisphosphatase class 1 from Actinobacillus succinogenes (strain ATCC 55618 / DSM 22257 / CCUG 43843 / 130Z).